The primary structure comprises 185 residues: Ribosome-recycling factor (185 aa).

The protein belongs to the RRF family.

It is found in the cytoplasm. Its function is as follows. Responsible for the release of ribosomes from messenger RNA at the termination of protein biosynthesis. May increase the efficiency of translation by recycling ribosomes from one round of translation to another. In Aeromonas salmonicida (strain A449), this protein is Ribosome-recycling factor.